A 247-amino-acid chain; its full sequence is Protein Thf1 (247 aa).

Residues 198 to 224 (IAQVRQAMDDILEAQKKRREADQAKKE) adopt a coiled-coil conformation. Residues 209–247 (LEAQKKRREADQAKKEGSDDTPTTEASTPDSEPTSEVSS) are disordered. Residues 210–226 (EAQKKRREADQAKKEGS) are compositionally biased toward basic and acidic residues. The segment covering 228-247 (DTPTTEASTPDSEPTSEVSS) has biased composition (polar residues).

It belongs to the THF1 family.

Its function is as follows. May be involved in photosynthetic membrane biogenesis. The polypeptide is Protein Thf1 (Acaryochloris marina (strain MBIC 11017)).